Consider the following 213-residue polypeptide: GTP-binding protein yptV4 (213 aa).

13 to 21 (GDTGVGKSC) contacts GTP. An Effector region motif is present at residues 35–43 (HDLTIGVEF). GTP is bound by residues 61-65 (DTAGQ), 119-122 (NKCD), and 149-151 (SAR). A disordered region spans residues 194–213 (AGPQAAKPGEGDARKSSSCC). Over residues 202–213 (GEGDARKSSSCC) the composition is skewed to basic and acidic residues. S-geranylgeranyl cysteine attachment occurs at residues cysteine 212 and cysteine 213.

It belongs to the small GTPase superfamily. Rab family.

The protein resides in the cell membrane. In terms of biological role, protein transport. Probably involved in vesicular traffic. This Volvox carteri (Green alga) protein is GTP-binding protein yptV4 (YPTV4).